Here is a 343-residue protein sequence, read N- to C-terminus: Anthranilate phosphoribosyltransferase (343 aa).

Residues glycine 84, 87 to 88 (GD), threonine 92, 94 to 97 (NIST), 112 to 120 (KHGNRGVSS), and serine 124 contribute to the 5-phospho-alpha-D-ribose 1-diphosphate site. Glycine 84 serves as a coordination point for anthranilate. Serine 96 contacts Mg(2+). Position 115 (asparagine 115) interacts with anthranilate. An anthranilate-binding site is contributed by arginine 170. Mg(2+) is bound by residues aspartate 229 and glutamate 230.

Belongs to the anthranilate phosphoribosyltransferase family. As to quaternary structure, homodimer. Mg(2+) serves as cofactor.

It catalyses the reaction N-(5-phospho-beta-D-ribosyl)anthranilate + diphosphate = 5-phospho-alpha-D-ribose 1-diphosphate + anthranilate. It participates in amino-acid biosynthesis; L-tryptophan biosynthesis; L-tryptophan from chorismate: step 2/5. Catalyzes the transfer of the phosphoribosyl group of 5-phosphorylribose-1-pyrophosphate (PRPP) to anthranilate to yield N-(5'-phosphoribosyl)-anthranilate (PRA). The polypeptide is Anthranilate phosphoribosyltransferase (Burkholderia cenocepacia (strain ATCC BAA-245 / DSM 16553 / LMG 16656 / NCTC 13227 / J2315 / CF5610) (Burkholderia cepacia (strain J2315))).